A 191-amino-acid polypeptide reads, in one-letter code: RRP15-like protein (191 aa).

Over residues 1–11 (MSTKNRDRLVV) the composition is skewed to basic and acidic residues. Residues 1-52 (MSTKNRDRLVVTEDSDDDNEREEMSSGGESGEEGPSSVDGGAGDADETVAFP) form a disordered region. Positions 53–84 (AIERRKKKVIKKLTKKEQSLKKSVKEYRIKLA) form a coiled coil. A compositionally biased stretch (basic and acidic residues) spans 119–153 (QKTMSDAVKEKMTARERREARQRFDGKNFDSDRFA). A disordered region spans residues 119–191 (QKTMSDAVKE…IDTGNYSDED (73 aa)). Positions 166–191 (GEDDDGEDQMDIGEEQIDTGNYSDED) are enriched in acidic residues.

This sequence belongs to the RRP15 family.

The protein is RRP15-like protein of Caenorhabditis elegans.